The chain runs to 332 residues: MGTVKDQLILNVLKEEQTPHNKITVVGVGAVGMACAISILMKDLADELALVDVIEDKLKGEMMDLQHGSLFLKTPKIVSSKDYAVTANSKLVVITAGARQQEGESRLNLVQRNVNIFKFIIPNIVKYSPNCKLLVVSNPVDILTYVAWKLSGFPKNRVIGSGCNLDSARFRYLMGEKLGIHSSSCHGWILGEHGDSSVPVWSGVNVAGVSLKSLHPALGTDSDSEQWKDVHKQVVESAYEVIKLKGYTSWAIGLSVADLAESIMKNLRRVHPISTMIKGLYGINEDVFLSVPCILGQNGISDVVKVTLTTEEESRLKQSADTLWGIQKELQF.

K5 is modified (N6-acetyllysine; alternate). At K5 the chain carries N6-succinyllysine; alternate. K14 bears the N6-acetyllysine mark. The residue at position 18 (T18) is a Phosphothreonine. G29 to K57 contributes to the NAD(+) binding site. The residue at position 57 (K57) is an N6-acetyllysine; alternate. Residue K57 forms a Glycyl lysine isopeptide (Lys-Gly) (interchain with G-Cter in SUMO2); alternate linkage. K81 carries the N6-acetyllysine modification. Position 99 (R99) interacts with NAD(+). R106 lines the substrate pocket. K118 carries the post-translational modification N6-acetyllysine; alternate. K118 carries the post-translational modification N6-succinyllysine; alternate. N6-acetyllysine is present on K126. N138 provides a ligand contact to NAD(+). Substrate contacts are provided by N138 and R169. Residue H193 is the Proton acceptor of the active site. K232 carries the N6-acetyllysine modification. Y239 is subject to Phosphotyrosine. Position 243 is an N6-acetyllysine (K243). T248 lines the substrate pocket. Phosphothreonine is present on residues T309 and T322.

The protein belongs to the LDH/MDH superfamily. LDH family. In terms of assembly, homotetramer. Interacts with PTEN upstream reading frame protein MP31. ISGylated.

The protein resides in the cytoplasm. It catalyses the reaction (S)-lactate + NAD(+) = pyruvate + NADH + H(+). It functions in the pathway fermentation; pyruvate fermentation to lactate; (S)-lactate from pyruvate: step 1/1. Functionally, interconverts simultaneously and stereospecifically pyruvate and lactate with concomitant interconversion of NADH and NAD(+). This is L-lactate dehydrogenase A chain (LDHA) from Monodelphis domestica (Gray short-tailed opossum).